We begin with the raw amino-acid sequence, 122 residues long: MIQPQTYLNVADNSGARELMCIRIIGASNRRYAHIGDVIVAVIKEAIPNTPLERSEVIRAVIVRTCKELKRNNGTIIRYDDNAAVVIDQEGNPKGTRVFGAIPRELRQLNFTKIVSLAPEVL.

It belongs to the universal ribosomal protein uL14 family. Part of the 50S ribosomal subunit.

It is found in the plastid. It localises to the chloroplast. In terms of biological role, binds to 23S rRNA. The protein is Large ribosomal subunit protein uL14c of Lepidium virginicum (Virginia pepperweed).